The chain runs to 540 residues: Maintenance of mitochondrial morphology protein 1 (540 aa).

Residues 1–25 (MAGPSNQTQPPPPVLTQPSLSFTQG) lie on the Lumenal side of the membrane. The helical transmembrane segment at 26 to 46 (LLVGQLSVVLLIGAFIKFFIF) threads the bilayer. At 47 to 540 (GEAPPHPSRN…GSMPDPVVVT (494 aa)) the chain is on the cytoplasmic side. Disordered stretches follow at residues 52–135 (HPSR…SHQP), 275–331 (GPGT…ATAA), 416–471 (GRTG…GGSM), and 509–540 (YGGAQGGGGGGGRGGEEQFAIPGSMPDPVVVT). 3 stretches are compositionally biased toward polar residues: residues 69–81 (YSLNSISADSSPR), 88–105 (STSNILRPVPSSSTNTRS), and 112–121 (YSATPTNPTS). Residues 122–132 (KHSRSRPHHSS) are compositionally biased toward basic residues. Residues 134 to 409 (QPESLDWFNV…EPRVQVVGLP (276 aa)) form the SMP-LTD domain. A compositionally biased stretch (low complexity) spans 321 to 331 (TNTNTAGATAA). Composition is skewed to gly residues over residues 442 to 471 (TAGGDGVGVRGGGGGGGGGGGVGGSGGGSM) and 511 to 521 (GAQGGGGGGGR).

Belongs to the MMM1 family. In terms of assembly, homodimer. Component of the ER-mitochondria encounter structure (ERMES) or MDM complex, composed of MMM1, MDM10, MDM12 and MDM34. An MMM1 homodimer associates with one molecule of MDM12 on each side in a pairwise head-to-tail manner, and the SMP-LTD domains of MMM1 and MDM12 generate a continuous hydrophobic tunnel for phospholipid trafficking.

It localises to the endoplasmic reticulum membrane. Its function is as follows. Component of the ERMES/MDM complex, which serves as a molecular tether to connect the endoplasmic reticulum (ER) and mitochondria. Components of this complex are involved in the control of mitochondrial shape and protein biogenesis, and function in nonvesicular lipid trafficking between the ER and mitochondria. The MDM12-MMM1 subcomplex functions in the major beta-barrel assembly pathway that is responsible for biogenesis of all outer membrane beta-barrel proteins, and acts in a late step after the SAM complex. The MDM10-MDM12-MMM1 subcomplex further acts in the TOM40-specific pathway after the action of the MDM12-MMM1 complex. Essential for establishing and maintaining the structure of mitochondria and maintenance of mtDNA nucleoids. The protein is Maintenance of mitochondrial morphology protein 1 of Blastomyces gilchristii (strain SLH14081) (Blastomyces dermatitidis).